The chain runs to 1410 residues: ABC transporter C family member 13 (1410 aa).

The next 8 membrane-spanning stretches (helical) occupy residues Ile-23–Thr-43, Leu-60–Val-80, Val-88–Leu-108, Ile-122–Phe-142, Gln-148–Ile-168, Leu-391–Ile-411, Val-474–Leu-494, and Phe-505–Ile-525. The 276-residue stretch at Cys-255–Asp-530 folds into the ABC transmembrane type-1 1 domain. Residues Val-564 to Glu-791 form the ABC transporter 1 domain. Gly-602–Thr-609 contributes to the ATP binding site. The next 6 helical transmembrane spans lie at Ala-844–Gly-864, Thr-889–Val-909, Ser-963–Leu-985, Val-990–Phe-1009, Ile-1087–Phe-1107, and Gly-1111–Leu-1131. Residues Thr-852–Lys-1139 form the ABC transmembrane type-1 2 domain. The ABC transporter 2 domain maps to Val-1174–Arg-1407. ATP is bound at residue Gly-1208–Ser-1215.

Belongs to the ABC transporter superfamily. ABCC family. Conjugate transporter (TC 3.A.1.208) subfamily. In terms of tissue distribution, ubiquitous.

It is found in the membrane. It carries out the reaction ATP + H2O + xenobioticSide 1 = ADP + phosphate + xenobioticSide 2.. Its function is as follows. Pump for glutathione S-conjugates. This chain is ABC transporter C family member 13 (ABCC13), found in Arabidopsis thaliana (Mouse-ear cress).